The following is a 394-amino-acid chain: NAD(P)H-quinone oxidoreductase subunit H (394 aa).

The protein belongs to the complex I 49 kDa subunit family. As to quaternary structure, NDH-1 can be composed of about 15 different subunits; different subcomplexes with different compositions have been identified which probably have different functions.

Its subcellular location is the cellular thylakoid membrane. The enzyme catalyses a plastoquinone + NADH + (n+1) H(+)(in) = a plastoquinol + NAD(+) + n H(+)(out). The catalysed reaction is a plastoquinone + NADPH + (n+1) H(+)(in) = a plastoquinol + NADP(+) + n H(+)(out). Functionally, NDH-1 shuttles electrons from an unknown electron donor, via FMN and iron-sulfur (Fe-S) centers, to quinones in the respiratory and/or the photosynthetic chain. The immediate electron acceptor for the enzyme in this species is believed to be plastoquinone. Couples the redox reaction to proton translocation, and thus conserves the redox energy in a proton gradient. Cyanobacterial NDH-1 also plays a role in inorganic carbon-concentration. The chain is NAD(P)H-quinone oxidoreductase subunit H from Prochlorococcus marinus (strain MIT 9313).